A 324-amino-acid chain; its full sequence is MKPSVILYKALPDDLLQRLQEHFTVHQVANLSPQTVEQNAAIFAEAEGLLGSNENVDAALLEKMPKLRATSTISVGYDNFDVDALTARKILLMHTPTVLTETVADTLMALVLSTARRVVEVAERVKAGEWTASIGPDWYGTDVHHKTLGIVGMGRIGMALAQRAHFGFNMPILYNARRHHKEAEERFNARYCDLDTLLQESDFVCLILPLTDETHHLFGAEQFAKMKSSAIFINAGRGPVVDENALIAALQKGEIHAAGLDVFEQEPLSVDSPLLSMANVVAVPHIGSATYETRYGMAACAVDNLIDALQGKVEKNCVNPHVAD.

Residues arginine 237 and glutamate 266 contribute to the active site. The Proton donor role is filled by histidine 285.

This sequence belongs to the D-isomer specific 2-hydroxyacid dehydrogenase family. GhrB subfamily. Homodimer.

The protein resides in the cytoplasm. The enzyme catalyses glycolate + NADP(+) = glyoxylate + NADPH + H(+). It carries out the reaction (R)-glycerate + NAD(+) = 3-hydroxypyruvate + NADH + H(+). It catalyses the reaction (R)-glycerate + NADP(+) = 3-hydroxypyruvate + NADPH + H(+). In terms of biological role, catalyzes the NADPH-dependent reduction of glyoxylate and hydroxypyruvate into glycolate and glycerate, respectively. This chain is Glyoxylate/hydroxypyruvate reductase B, found in Escherichia coli (strain ATCC 8739 / DSM 1576 / NBRC 3972 / NCIMB 8545 / WDCM 00012 / Crooks).